Here is a 285-residue protein sequence, read N- to C-terminus: Phosphatidylglycerol--prolipoprotein diacylglyceryl transferase (285 aa).

The next 5 membrane-spanning stretches (helical) occupy residues 17 to 37 (ALGL…GLTL), 43 to 63 (WYAL…LFLL), 78 to 98 (LVFW…VLFY), 113 to 133 (WEGG…IWWV), and 139 to 159 (LSWL…LFLG). An a 1,2-diacyl-sn-glycero-3-phospho-(1'-sn-glycerol)-binding site is contributed by R160. 3 helical membrane passes run 195 to 215 (LYEA…QFFA), 223 to 243 (GKLA…VEWF), and 256 to 276 (GLTM…WLII).

The protein belongs to the Lgt family.

It is found in the cell inner membrane. It catalyses the reaction L-cysteinyl-[prolipoprotein] + a 1,2-diacyl-sn-glycero-3-phospho-(1'-sn-glycerol) = an S-1,2-diacyl-sn-glyceryl-L-cysteinyl-[prolipoprotein] + sn-glycerol 1-phosphate + H(+). It functions in the pathway protein modification; lipoprotein biosynthesis (diacylglyceryl transfer). Catalyzes the transfer of the diacylglyceryl group from phosphatidylglycerol to the sulfhydryl group of the N-terminal cysteine of a prolipoprotein, the first step in the formation of mature lipoproteins. The sequence is that of Phosphatidylglycerol--prolipoprotein diacylglyceryl transferase from Zymomonas mobilis subsp. mobilis (strain ATCC 31821 / ZM4 / CP4).